The sequence spans 156 residues: Ribosome maturation factor RimP (156 aa).

This sequence belongs to the RimP family.

It is found in the cytoplasm. In terms of biological role, required for maturation of 30S ribosomal subunits. This chain is Ribosome maturation factor RimP, found in Bacillus velezensis (strain DSM 23117 / BGSC 10A6 / LMG 26770 / FZB42) (Bacillus amyloliquefaciens subsp. plantarum).